We begin with the raw amino-acid sequence, 830 residues long: WD repeat-containing protein 75 (830 aa).

9 WD repeats span residues 4-43 (EENIRVVRCGGSELNFRRAVFSADSKYIFCVSGDFVKVYS), 47-86 (EECVHILHGHRNLVTGIQLNPNNHLQLYSCSLDGTIKLWD), 90-131 (GILI…QLVS), 145-184 (KELSFVLDYINQSPKCIAFGNEGVYVAAVREFYLSVYFFK), 193-231 (LSSSRNKKHAKNNFTCVACHPTEDCIASGHMDGKIRLWR), 237-276 (KKYTYTCLHWHHDMVMDLAFSVTGTSLLSGGRESVLVEWR), 279-318 (TEKNKEFLPRLGATIEHISVSPAGDLFCTSHSDNKIIIIH), 324-362 (SAVIQGLVKDRSIFTGLMIDPRTKALVLNGKPGHLQFYS), and 376-423 (QQEY…KLWM). Lys123 participates in a covalent cross-link: Glycyl lysine isopeptide (Lys-Gly) (interchain with G-Cter in SUMO2). Lys427 participates in a covalent cross-link: Glycyl lysine isopeptide (Lys-Gly) (interchain with G-Cter in SUMO2). WD repeat units follow at residues 430–474 (GFIL…KVWI), 487–525 (GWTCDFVGSYHKYQATNCCFSEDGSLLAVSFEEIVTIWD), 529–569 (WELK…CCWN), and 574–611 (ALEWNAKLNVRVMEPDPNSENIAAISQSSVGSDLFVFK). An N6-acetyllysine modification is found at Lys466. Phosphoserine is present on residues Ser664 and Ser672. A Glycyl lysine isopeptide (Lys-Gly) (interchain with G-Cter in SUMO2) cross-link involves residue Lys676. The segment at 763–806 (SAKEIPEDVDMEEEKESEDSDEENDFTEKVQDTSNTGLGEDIIH) is disordered. Acidic residues predominate over residues 769–787 (EDVDMEEEKESEDSDEEND). 4 positions are modified to phosphoserine: Ser779, Ser782, Ser796, and Ser811.

As to quaternary structure, component of the proposed t-UTP subcomplex of the ribosomal small subunit (SSU) processome. SSU processome is composed of more than 70 proteins and the RNA chaperone small nucleolar RNA (snoRNA) U3.

Its subcellular location is the nucleus. It is found in the nucleolus. Ribosome biogenesis factor. Part of the small subunit (SSU) processome, first precursor of the small eukaryotic ribosomal subunit. During the assembly of the SSU processome in the nucleolus, many ribosome biogenesis factors, an RNA chaperone and ribosomal proteins associate with the nascent pre-rRNA and work in concert to generate RNA folding, modifications, rearrangements and cleavage as well as targeted degradation of pre-ribosomal RNA by the RNA exosome. Involved in nucleolar processing of pre-18S ribosomal RNA. Required for optimal pre-ribosomal RNA transcription by RNA polymerase I. In Homo sapiens (Human), this protein is WD repeat-containing protein 75.